Consider the following 212-residue polypeptide: Putative protein phosphatase 2C 53 (212 aa).

The PPM-type phosphatase domain occupies 1 to 208; that stretch reads MEDRFSAITN…DDISVMLIPL (208 aa). Aspartate 199 serves as a coordination point for Mn(2+).

This sequence belongs to the PP2C family. Requires Mg(2+) as cofactor. Mn(2+) serves as cofactor.

The catalysed reaction is O-phospho-L-seryl-[protein] + H2O = L-seryl-[protein] + phosphate. The enzyme catalyses O-phospho-L-threonyl-[protein] + H2O = L-threonyl-[protein] + phosphate. The protein is Putative protein phosphatase 2C 53 of Arabidopsis thaliana (Mouse-ear cress).